Reading from the N-terminus, the 739-residue chain is DEAD-box ATP-dependent RNA helicase 32 (739 aa).

Positions 71 to 99 (RKFAQLPISDKTKRGLKDAKYVDMTDVQS) match the Q motif motif. One can recognise a Helicase ATP-binding domain in the interval 102 to 277 (IPHALCGRDI…RLSLRDPEYI (176 aa)). An ATP-binding site is contributed by 115 to 122 (ARTGSGKT). A DEAD box motif is present at residues 225–228 (DEAD). The Helicase C-terminal domain occupies 303 to 461 (KLDMLWSFIK…EVSRLLAALL (159 aa)). Positions 643–689 (GAEMRKADIEDKKVDKERRREKRMKQKIKRKRGAMEDEEEEEEEDHD) form a coiled coil. The tract at residues 656–725 (VDKERRREKR…GGKINTDSLS (70 aa)) is disordered. Residues 661-674 (RREKRMKQKIKRKR) are compositionally biased toward basic residues. The span at 678 to 688 (EDEEEEEEEDH) shows a compositional bias: acidic residues.

It belongs to the DEAD box helicase family. DDX10/DBP4 subfamily.

The catalysed reaction is ATP + H2O = ADP + phosphate + H(+). The protein is DEAD-box ATP-dependent RNA helicase 32 (RH32) of Arabidopsis thaliana (Mouse-ear cress).